A 286-amino-acid chain; its full sequence is Bifunctional protein FolD (286 aa).

Residues 165-167 (GRS), S190, and V231 each bind NADP(+).

Belongs to the tetrahydrofolate dehydrogenase/cyclohydrolase family. In terms of assembly, homodimer.

It catalyses the reaction (6R)-5,10-methylene-5,6,7,8-tetrahydrofolate + NADP(+) = (6R)-5,10-methenyltetrahydrofolate + NADPH. It carries out the reaction (6R)-5,10-methenyltetrahydrofolate + H2O = (6R)-10-formyltetrahydrofolate + H(+). Its pathway is one-carbon metabolism; tetrahydrofolate interconversion. Catalyzes the oxidation of 5,10-methylenetetrahydrofolate to 5,10-methenyltetrahydrofolate and then the hydrolysis of 5,10-methenyltetrahydrofolate to 10-formyltetrahydrofolate. In Bacillus cereus (strain AH187), this protein is Bifunctional protein FolD.